We begin with the raw amino-acid sequence, 231 residues long: Probable glutathione S-transferase GSTU1 (231 aa).

The GST N-terminal domain maps to 5–84 (KELVLLDFWV…YLDDAFPGTP (80 aa)). Glutathione-binding positions include S15, K42, I56, and 68–69 (ES). Residues 97–220 (AAYARATARF…LPSPEKVYDF (124 aa)) enclose the GST C-terminal domain.

It belongs to the GST superfamily. Tau family.

The catalysed reaction is RX + glutathione = an S-substituted glutathione + a halide anion + H(+). Conjugation of reduced glutathione to a wide number of exogenous and endogenous hydrophobic electrophiles. In Oryza sativa subsp. indica (Rice), this protein is Probable glutathione S-transferase GSTU1 (GSTU1).